The primary structure comprises 66 residues: ATP synthase protein 8 (66 aa).

Residues 8-24 (TWLMMIMSMFLALFIIF) form a helical membrane-spanning segment. The residue at position 54 (Lys-54) is an N6-acetyllysine; alternate. Lys-54 bears the N6-succinyllysine; alternate mark. Lys-57 carries the post-translational modification N6-acetyllysine.

This sequence belongs to the ATPase protein 8 family. F-type ATPases have 2 components, CF(1) - the catalytic core - and CF(0) - the membrane proton channel. Component of an ATP synthase complex composed of ATP5PB, ATP5MC1, ATP5F1E, ATP5PD, ATP5ME, ATP5PF, ATP5MF, MT-ATP6, MT-ATP8, ATP5F1A, ATP5F1B, ATP5F1D, ATP5F1C, ATP5PO, ATP5MG, ATP5MK and ATP5MJ. Interacts with PRICKLE3.

Its subcellular location is the mitochondrion membrane. In terms of biological role, mitochondrial membrane ATP synthase (F(1)F(0) ATP synthase or Complex V) produces ATP from ADP in the presence of a proton gradient across the membrane which is generated by electron transport complexes of the respiratory chain. F-type ATPases consist of two structural domains, F(1) - containing the extramembraneous catalytic core and F(0) - containing the membrane proton channel, linked together by a central stalk and a peripheral stalk. During catalysis, ATP synthesis in the catalytic domain of F(1) is coupled via a rotary mechanism of the central stalk subunits to proton translocation. Part of the complex F(0) domain. Minor subunit located with subunit a in the membrane. In Cervus elaphus hippelaphus (European red deer), this protein is ATP synthase protein 8 (MT-ATP8).